Here is a 386-residue protein sequence, read N- to C-terminus: DNA replication and repair protein RecF (386 aa).

30–37 (GSNGFGKT) provides a ligand contact to ATP.

Belongs to the RecF family.

Its subcellular location is the cytoplasm. Its function is as follows. The RecF protein is involved in DNA metabolism; it is required for DNA replication and normal SOS inducibility. RecF binds preferentially to single-stranded, linear DNA. It also seems to bind ATP. The chain is DNA replication and repair protein RecF from Mycolicibacterium vanbaalenii (strain DSM 7251 / JCM 13017 / BCRC 16820 / KCTC 9966 / NRRL B-24157 / PYR-1) (Mycobacterium vanbaalenii).